The primary structure comprises 604 residues: UvrABC system protein C (604 aa).

The 79-residue stretch at 17–95 (SQPGVYRMLN…IKSLAPRYNI (79 aa)) folds into the GIY-YIG domain. The 36-residue stretch at 204–239 (DEVLKTIEQKMFEASDRQAYEQAVLFRDQMQALRMI) folds into the UVR domain.

The protein belongs to the UvrC family. Interacts with UvrB in an incision complex.

The protein localises to the cytoplasm. Functionally, the UvrABC repair system catalyzes the recognition and processing of DNA lesions. UvrC both incises the 5' and 3' sides of the lesion. The N-terminal half is responsible for the 3' incision and the C-terminal half is responsible for the 5' incision. In Nitrosomonas eutropha (strain DSM 101675 / C91 / Nm57), this protein is UvrABC system protein C.